The chain runs to 129 residues: C-type natriuretic peptide 1 (129 aa).

A signal peptide spans 1–24 (MSYKRGTCLGFIMLLMVSHHHTKG). A propeptide spanning residues 25–107 (KPLSSLQNLS…SRRYRQRNKK (83 aa)) is cleaved from the precursor. The cysteines at positions 113 and 129 are disulfide-linked.

This sequence belongs to the natriuretic peptide family.

It localises to the secreted. Functionally, hormone which plays a role in endochondral ossification through regulation of cartilaginous growth plate chondrocytes proliferation and differentiation. May also be vasoactive and natriuretic. May be important for freshwater adaptation. The polypeptide is C-type natriuretic peptide 1 (Aquarana catesbeiana (American bullfrog)).